Here is a 135-residue protein sequence, read N- to C-terminus: Transcriptional activator protein (135 aa).

Positions 17 to 32 match the Nuclear localization signal motif; the sequence is KIQHHIAKKRQVRRRR. A zinc finger lies at 37–54; the sequence is CGCSYYIHLDCINHGFTH. The transactivation stretch occupies residues 120 to 135; the sequence is HLDDLTVSDWSFFKSL.

The protein belongs to the geminiviridae transcriptional activator protein family. Monomer. Homodimer. Homooligomer. Self-interaction correlates with nuclear localization and efficient activation of transcription. Monomers suppress local silencing by interacting with and inactivating host adenosine kinase 2 (ADK2) in the cytoplasm. Interacts with and inhibits host SNF1 kinase. Binds to ssDNA. Phosphorylated.

It is found in the host nucleus. Its subcellular location is the host cytoplasm. Its function is as follows. Strong activator of the late viral genes promoters. Acts as a suppressor of RNA-mediated gene silencing, also known as post-transcriptional gene silencing (PTGS), a mechanism of plant viral defense that limits the accumulation of viral RNAs. TrAP suppresses the host RNA silencing by inhibiting adenosine kinase 2 (ADK2), a kinase involved in a general methylation pathway. Also suppresses the host basal defense by interacting with and inhibiting SNF1 kinase, a key regulator of cell metabolism implicated in innate antiviral defense. Determines pathogenicity. The sequence is that of Transcriptional activator protein from Tomato yellow leaf curl Sardinia virus (isolate Spain-2) (TYLCSV).